The primary structure comprises 213 residues: MNAPTFPYDTARLSELAQLLIDNVRELAQAGWTPATSSNFSHRLDDRHAAITVSGKDKGRLIEDDIMVVDFDGQAVGRPLRPSAETLLHTQLYRRFPEIGCVLHTHSPVQTIASRLYAPQGHIRVEGYELLKAFAGNSTHEMAIDIPVFANTQDMNVLSKQVDDLLDRQNLWGYLIDGHGLYAWGRDMADARRHLEAFEFLLHCELELRKLRG.

2 residues coordinate Zn(2+): His104 and His106.

The protein belongs to the aldolase class II family. MtnB subfamily. It depends on Zn(2+) as a cofactor.

It catalyses the reaction 5-(methylsulfanyl)-D-ribulose 1-phosphate = 5-methylsulfanyl-2,3-dioxopentyl phosphate + H2O. It participates in amino-acid biosynthesis; L-methionine biosynthesis via salvage pathway; L-methionine from S-methyl-5-thio-alpha-D-ribose 1-phosphate: step 2/6. Catalyzes the dehydration of methylthioribulose-1-phosphate (MTRu-1-P) into 2,3-diketo-5-methylthiopentyl-1-phosphate (DK-MTP-1-P). The sequence is that of Methylthioribulose-1-phosphate dehydratase from Stenotrophomonas maltophilia (strain R551-3).